A 308-amino-acid polypeptide reads, in one-letter code: Maspardin (308 aa).

An AB hydrolase-1 domain is found at 87-159 (FCDGFRKLLD…NSFWLMPAFM (73 aa)).

The protein belongs to the AB hydrolase superfamily. Interacts with CD4. Interacts with ALDH16A1.

It is found in the cytoplasm. In terms of biological role, may play a role as a negative regulatory factor in CD4-dependent T-cell activation. The polypeptide is Maspardin (SPG21) (Macaca fascicularis (Crab-eating macaque)).